Reading from the N-terminus, the 315-residue chain is Ornithine carbamoyltransferase, anabolic (315 aa).

Carbamoyl phosphate contacts are provided by residues 57-60, Q84, R108, and 135-138; these read STRT and HPCQ. L-ornithine is bound by residues N166, D230, and 234 to 235; that span reads SM. Carbamoyl phosphate contacts are provided by residues 270-271 and R298; that span reads CL.

The protein belongs to the aspartate/ornithine carbamoyltransferase superfamily. OTCase family. As to quaternary structure, homododecamer (tetramer of trimers).

Its subcellular location is the cytoplasm. It catalyses the reaction carbamoyl phosphate + L-ornithine = L-citrulline + phosphate + H(+). It functions in the pathway amino-acid biosynthesis; L-arginine biosynthesis; L-arginine from L-ornithine and carbamoyl phosphate: step 1/3. With respect to regulation, inhibited by the bisubstrate delta-N-phosphonoacetyl-L-ornithine (PALO). In terms of biological role, reversibly catalyzes the transfer of the carbamoyl group from carbamoyl phosphate (CP) to the N(epsilon) atom of ornithine (ORN) to produce L-citrulline, which is a substrate for argininosuccinate synthetase, the enzyme involved in the final step in arginine biosynthesis. This chain is Ornithine carbamoyltransferase, anabolic, found in Pyrococcus furiosus (strain ATCC 43587 / DSM 3638 / JCM 8422 / Vc1).